Here is a 264-residue protein sequence, read N- to C-terminus: S-methyl-5'-thioadenosine phosphorylase (264 aa).

Phosphate contacts are provided by residues S14 and 55 to 56 (RH). M180 contributes to the substrate binding site. T181 serves as a coordination point for phosphate. Substrate is bound at residue 204 to 206 (DVD).

The protein belongs to the PNP/MTAP phosphorylase family. MTAP subfamily. In terms of assembly, homodimer.

It carries out the reaction S-methyl-5'-thioadenosine + phosphate = 5-(methylsulfanyl)-alpha-D-ribose 1-phosphate + adenine. It participates in amino-acid biosynthesis; L-methionine biosynthesis via salvage pathway; S-methyl-5-thio-alpha-D-ribose 1-phosphate from S-methyl-5'-thioadenosine (phosphorylase route): step 1/1. With respect to regulation, not inhibited by adenosine, potently inhibited by MT-DADMe-immucillin A. Catalyzes the reversible phosphorylation of S-methyl-5'-thioadenosine (MTA) to adenine and 5-methylthioribose-1-phosphate. Involved in the breakdown of MTA, a major by-product of polyamine biosynthesis. Responsible for the first step in the methionine salvage pathway after MTA has been generated from S-adenosylmethionine. Prefers MTA, with 2% activity on adenosine, 0.8% activity on S-adenosyl-L-homocysteine and no activity on other tested nucleosides. This Mycobacterium tuberculosis (strain ATCC 25618 / H37Rv) protein is S-methyl-5'-thioadenosine phosphorylase.